We begin with the raw amino-acid sequence, 500 residues long: Monocarboxylate transporter 1 (500 aa).

The Cytoplasmic segment spans residues Met1–Val22. A helical transmembrane segment spans residues Val23–Phe44. Lys38 is a binding site for (S)-lactate. The Extracellular segment spans residues Lys45–Thr55. A helical transmembrane segment spans residues Ser56–Val80. Topologically, residues Asn81–Gly84 are cytoplasmic. The chain crosses the membrane as a helical span at residues Ser85 to Phe105. Residues Cys106–Val109 lie on the Extracellular side of the membrane. Residues Gln110–Leu132 traverse the membrane as a helical segment. Over Thr133 to Ala146 the chain is Cytoplasmic. Residues Asn147–Phe169 form a helical membrane-spanning segment. Over Gly170–Trp174 the chain is Extracellular. The chain crosses the membrane as a helical span at residues Arg175 to Leu194. The Cytoplasmic segment spans residues Met195–Arg261. Phosphoserine is present on residues Ser210 and Ser213. Position 231 is a phosphothreonine (Thr231). A helical membrane pass occupies residues Gly262–Gly288. At Lys289 to Ser295 the chain is on the extracellular side. The helical transmembrane segment at Glu296–Gly317 threads the bilayer. Asp309 contacts H(+). Arg313 contributes to the (S)-lactate binding site. The Cytoplasmic portion of the chain corresponds to Leu318–Arg328. The chain crosses the membrane as a helical span at residues Ile329–Leu349. Residues Ser350 to Tyr353 are Extracellular-facing. A helical transmembrane segment spans residues Val354–Phe375. Over Glu376–Ser389 the chain is Cytoplasmic. The chain crosses the membrane as a helical span at residues Ala390–Gly410. The Extracellular portion of the chain corresponds to Arg411 to Tyr421. Residues Thr422 to Ile443 traverse the membrane as a helical segment. Residues Asn444–Val500 lie on the Cytoplasmic side of the membrane. The span at Ala454 to Glu465 shows a compositional bias: basic and acidic residues. The tract at residues Ala454–Val500 is disordered. A Phosphoserine modification is found at Ser461. Thr466 carries the phosphothreonine modification. Residues Ser467, Ser483, and Ser498 each carry the phosphoserine modification. The segment covering Glu482–Val500 has biased composition (basic and acidic residues).

Belongs to the major facilitator superfamily. Monocarboxylate porter (TC 2.A.1.13) family. Interacts with EMB; interaction mediates SLC16A1 targeting to the plasma membrane. Interacts with isoform 2 of BSG; interaction mediates SLC16A1 targeting to the plasma membrane. In terms of tissue distribution, widely expressed. Detected in heart and in blood lymphocytes and monocytes (at protein level).

It is found in the cell membrane. Its subcellular location is the basolateral cell membrane. It localises to the apical cell membrane. The catalysed reaction is (S)-lactate(in) + H(+)(in) = (S)-lactate(out) + H(+)(out). The enzyme catalyses acetate(out) + H(+)(out) = acetate(in) + H(+)(in). It catalyses the reaction acetoacetate(out) + H(+)(out) = acetoacetate(in) + H(+)(in). It carries out the reaction pyruvate(out) + H(+)(out) = pyruvate(in) + H(+)(in). The catalysed reaction is (R)-3-hydroxybutanoate(out) + H(+)(out) = (R)-3-hydroxybutanoate(in) + H(+)(in). The enzyme catalyses 3-methyl-2-oxobutanoate(out) + H(+)(out) = 3-methyl-2-oxobutanoate(in) + H(+)(in). It catalyses the reaction 4-methyl-2-oxopentanoate(out) + H(+)(out) = 4-methyl-2-oxopentanoate(in) + H(+)(in). It carries out the reaction succinate(in) + 2 H(+)(in) = succinate(out) + 2 H(+)(out). Its activity is regulated as follows. Selectively inhibited by AZD3965, that acts as a competitive inhibitor binding to the central channel in the outward open conformation. Its function is as follows. Bidirectional proton-coupled monocarboxylate transporter. Catalyzes the rapid transport across the plasma membrane of many monocarboxylates such as lactate, pyruvate, acetate and the ketone bodies acetoacetate and beta-hydroxybutyrate, and thus contributes to the maintenance of intracellular pH. The transport direction is determined by the proton motive force and the concentration gradient of the substrate monocarboxylate. MCT1 is a major lactate exporter. Plays a role in cellular responses to a high-fat diet by modulating the cellular levels of lactate and pyruvate that contribute to the regulation of central metabolic pathways and insulin secretion, with concomitant effects on plasma insulin levels and blood glucose homeostasis. Facilitates the protonated monocarboxylate form of succinate export, that its transient protonation upon muscle cell acidification in exercising muscle and ischemic heart. Functions via alternate outward- and inward-open conformation states. Protonation and deprotonation of 309-Asp is essential for the conformational transition. The protein is Monocarboxylate transporter 1 of Homo sapiens (Human).